Consider the following 627-residue polypeptide: Putative ankyrin repeat protein L122 (627 aa).

ANK repeat units follow at residues 61–94 (KGWT…DVHI), 98–130 (KGRT…DINS), 153–186 (HACY…DPNI), 190–223 (YGKT…NANH), 228–259 (AETV…DINH), 263–296 (IGFT…NINL), 300–333 (DGFT…DIND), 337–370 (NNVT…DLEI), 374–407 (YDWT…NVNV), 411–444 (LGHT…NPNL), 448–480 (DKNT…DSNT), and 491–523 (REYN…NYSD).

This is Putative ankyrin repeat protein L122 from Acanthamoeba polyphaga (Amoeba).